A 208-amino-acid chain; its full sequence is Small ribosomal subunit protein uS4 (208 aa).

The region spanning 98–160 is the S4 RNA-binding domain; it reads RRLDNVVYRM…SKNNVQIQRA (63 aa).

Belongs to the universal ribosomal protein uS4 family. In terms of assembly, part of the 30S ribosomal subunit. Contacts protein S5. The interaction surface between S4 and S5 is involved in control of translational fidelity.

One of the primary rRNA binding proteins, it binds directly to 16S rRNA where it nucleates assembly of the body of the 30S subunit. Its function is as follows. With S5 and S12 plays an important role in translational accuracy. The chain is Small ribosomal subunit protein uS4 from Nautilia profundicola (strain ATCC BAA-1463 / DSM 18972 / AmH).